The primary structure comprises 401 residues: 4-hydroxy-3-methylbut-2-en-1-yl diphosphate synthase (ferredoxin) (401 aa).

Residues Cys306, Cys309, Cys340, and Glu347 each coordinate [4Fe-4S] cluster.

It belongs to the IspG family. [4Fe-4S] cluster is required as a cofactor.

The enzyme catalyses (2E)-4-hydroxy-3-methylbut-2-enyl diphosphate + 2 oxidized [2Fe-2S]-[ferredoxin] + H2O = 2-C-methyl-D-erythritol 2,4-cyclic diphosphate + 2 reduced [2Fe-2S]-[ferredoxin] + H(+). It participates in isoprenoid biosynthesis; isopentenyl diphosphate biosynthesis via DXP pathway; isopentenyl diphosphate from 1-deoxy-D-xylulose 5-phosphate: step 5/6. Converts 2C-methyl-D-erythritol 2,4-cyclodiphosphate (ME-2,4cPP) into 1-hydroxy-2-methyl-2-(E)-butenyl 4-diphosphate. The polypeptide is 4-hydroxy-3-methylbut-2-en-1-yl diphosphate synthase (ferredoxin) (Synechococcus sp. (strain CC9902)).